Here is a 468-residue protein sequence, read N- to C-terminus: Argininosuccinate synthase (468 aa).

ATP contacts are provided by residues 10–18 and alanine 37; that span reads AYSGGLDTS. Tyrosine 90 and serine 95 together coordinate L-citrulline. ATP is bound at residue glycine 120. L-aspartate-binding residues include threonine 122, asparagine 126, and aspartate 127. Asparagine 126 lines the L-citrulline pocket. Arginine 130, serine 182, serine 191, glutamate 267, and tyrosine 279 together coordinate L-citrulline. Over residues 445-457 the composition is skewed to low complexity; the sequence is PVAAKATAKPVKA. Residues 445–468 are disordered; it reads PVAAKATAKPVKAPVKKPIAKKKG. Residues 458–468 are compositionally biased toward basic residues; the sequence is PVKKPIAKKKG.

The protein belongs to the argininosuccinate synthase family. Type 1 subfamily. In terms of assembly, homotetramer.

The protein resides in the cytoplasm. The catalysed reaction is L-citrulline + L-aspartate + ATP = 2-(N(omega)-L-arginino)succinate + AMP + diphosphate + H(+). Its pathway is amino-acid biosynthesis; L-arginine biosynthesis; L-arginine from L-ornithine and carbamoyl phosphate: step 2/3. The chain is Argininosuccinate synthase from Dechloromonas aromatica (strain RCB).